The following is a 247-amino-acid chain: MNEKIAILSAYSFVNIEEPANLIPKLLLIGKRKYVRGTILLANEGFNGSFSGSYENVNLVLEELIKLTGPKDVNVKINYSDVHPFQKLKVRLKKEIVAMNVDGLNVDLFKGEYIEPKDWDEFITQQDVIVIDTRNDYEVEVGTFKSAINPNTKTFKQFPAWVQQNQELLKGKKIAMVCTGGIRCEKSTSLLKSIGYDEVYHLKGGILQYLEDTQNKNNLWQGECFVFDDRRAVTDDLSPVERHWLQR.

The Rhodanese domain occupies 124-218 (TQQDVIVIDT…YLEDTQNKNN (95 aa)). The Cysteine persulfide intermediate role is filled by Cys-178.

Belongs to the TrhO family.

It carries out the reaction uridine(34) in tRNA + AH2 + O2 = 5-hydroxyuridine(34) in tRNA + A + H2O. Its function is as follows. Catalyzes oxygen-dependent 5-hydroxyuridine (ho5U) modification at position 34 in tRNAs. This Rickettsia conorii (strain ATCC VR-613 / Malish 7) protein is tRNA uridine(34) hydroxylase.